A 798-amino-acid polypeptide reads, in one-letter code: Integrin beta-1 (798 aa).

The signal sequence occupies residues 1–20; that stretch reads MNLQLIFWIGLISSVCCVFG. At 21 to 728 the chain is on the extracellular side; that stretch reads QADEDRCLKA…ETPECPTGPD (708 aa). A PSI domain is found at 26–76; the sequence is RCLKANAKSCGECIQAGPNCGWCTNSTFLQEGMPTSARCDDLEALKKKGCH. Intrachain disulfides connect Cys27-Cys45, Cys35-Cys464, Cys38-Cys64, Cys48-Cys75, Cys207-Cys213, Cys261-Cys301, Cys401-Cys415, Cys435-Cys462, Cys466-Cys486, Cys477-Cys489, Cys491-Cys500, Cys502-Cys533, Cys516-Cys531, Cys525-Cys536, Cys538-Cys553, Cys555-Cys576, Cys560-Cys574, Cys568-Cys579, Cys581-Cys590, Cys592-Cys615, Cys599-Cys613, Cys607-Cys618, Cys620-Cys630, Cys633-Cys636, Cys640-Cys691, Cys646-Cys665, Cys649-Cys661, and Cys699-Cys723. Residues 75-91 show a composition bias toward basic and acidic residues; the sequence is CHPNDTENPRGSKDIKK. The interval 75-105 is disordered; the sequence is CHPNDTENPRGSKDIKKNKNVTNRSKGTAEK. Residues Asn94 and Asn97 are each glycosylated (N-linked (GlcNAc...) asparagine). The 239-residue stretch at 140 to 378 folds into the VWFA domain; that stretch reads DYPIDLYYLM…QLIIDAYNSL (239 aa). Residues Ser152 and Ser154 each contribute to the Mg(2+) site. 4 residues coordinate Ca(2+): Ser154, Asp157, Asp158, and Glu189. Residues 207–213 form a CX3CL1-binding region; sequence CTNEQNC. The N-linked (GlcNAc...) asparagine glycan is linked to Asn212. Asn244, Asp246, Pro248, and Glu249 together coordinate Ca(2+). Position 249 (Glu249) interacts with Mg(2+). The N-linked (GlcNAc...) asparagine glycan is linked to Asn269. A CX3CL1-binding region spans residues 295–314; that stretch reads LPNDGQCHLKNDVYTMSHYY. Ala362 serves as a coordination point for Ca(2+). Residues 383–465 are interaction with TMEM182; the sequence is ILENSKLPEG…IILQFICECE (83 aa). N-linked (GlcNAc...) asparagine glycosylation is found at Asn406 and Asn417. 4 consecutive I-EGF domains span residues 466-501, 502-554, 555-591, and 592-631; these read CQGE…RHCE, CSTD…KFCE, CDNF…SACD, and CSLD…PTCE. Asn481 carries an N-linked (GlcNAc...) asparagine glycan. N-linked (GlcNAc...) asparagine glycosylation occurs at Asn520. N-linked (GlcNAc...) asparagine glycosylation occurs at Asn584. N-linked (GlcNAc...) asparagine glycosylation occurs at Asn669. Residues 729-749 form a helical membrane-spanning segment; sequence IIPIVAGVVAGIVLIGLALLL. At 750-798 the chain is on the cytoplasmic side; sequence IWKLLMIIHDRREFAKFEKERMNAKWDTGENPIYKSAVTTVVNPKYEGK. Positions 762-767 are signal for sorting from recycling endosomes; interaction with ACAP1; the sequence is EFAKFE. Phosphothreonine is present on Thr777. Position 783 is a phosphotyrosine (Tyr783). Ser785 is modified (phosphoserine). The segment at 785–792 is interaction with ITGB1BP1; that stretch reads SAVTTVVN. Thr789 bears the Phosphothreonine mark. An N6-acetyllysine; alternate modification is found at Lys794. Residue Lys794 forms a Glycyl lysine isopeptide (Lys-Gly) (interchain with G-Cter in SUMO1); alternate linkage.

It belongs to the integrin beta chain family. In terms of assembly, interacts with seprase FAP (seprase); the interaction occurs at the cell surface of invadopodia membrane in a collagen-dependent manner. Heterodimer of an alpha and a beta subunit. Beta-1 associates with either alpha-1, alpha-2, alpha-3, alpha-4, alpha-5, alpha-6, alpha-7, alpha-8, alpha-9, alpha-10, alpha-11 or alpha-V. ITGA6:ITGB1 is found in a complex with CD9; interaction takes place in oocytes and is involved in sperm-egg fusion. Binds LGALS3BP and NMRK2, when associated with alpha-7, but not with alpha-5. Interacts with FLNA, FLNB, FLNC and RANBP9. Interacts with KRT1 in the presence of RACK1 and SRC. Interacts with JAML; integrin alpha-4/beta-1 may regulate leukocyte to endothelial cells adhesion by controlling JAML homodimerization. Interacts with RAB21. Interacts (via the cytoplasmic region) with RAB25 (via the hypervariable C-terminal region). Interacts with MYO10. Interacts with ITGB1BP1 (via C-terminal region); the interaction is a prerequisite for focal adhesion disassembly. Interacts with TLN1; the interaction is prevented by competitive binding of ITGB1BP1. Interacts with ACAP1; required for ITGB1 recycling. Interacts with ASAP3. Interacts with FERMT2; the interaction is inhibited in presence of ITGB1BP1. Interacts with DAB2. Interacts with FGR and HCK. Interacts with alpha-7A and alpha-7B in adult skeletal muscle. Interacts with alpha-7B in cardiomyocytes of adult heart. Interacts with EMP2; the interaction may be direct or indirect and ITGB1 has a heterodimer form. ITGA5:ITGB1 interacts with CCN3. ITGA4:ITGB1 is found in a ternary complex with CX3CR1 and CX3CL1. ITGA5:ITGB1 interacts with FBN1. ITGA5:ITGB1 acts as a receptor for fibronectin FN1 and mediates R-G-D-dependent cell adhesion to FN1. ITGA5:ITGB1 interacts with IL1B. Interacts with MDK. ITGA4:ITGB1 interacts with MDK; this interaction mediates MDK-induced osteoblast cells migration through PXN phosphorylation. ITGA6:ITGB1 interacts with MDK; this interaction mediates MDK-induced neurite-outgrowth. ITGA5:ITGB1 interacts with ACE2. Interacts with TMEM182 and LAMB1. Interacts with tensin TNS3; TNS3 also interacts with PEAK1, thus acting as an adapter molecule to bridge the association of PEAK1 with ITGB1. Interacts with tensin TNS4; the interaction displaces tensin TNS3 from the ITGB1 cytoplasmic tail and promotes ITGB1 stability. Integrin ITGA9:ITGB1 interacts with SPP1/OPN (via N-terminus). Integrin ITGA9:ITGB1 interacts with TNC/TNFN3 (via the 3rd Fibronectin type-III domain). Integrins ITGA4:ITGB1 and ITGA9:ITGB1 interact with SVEP1 (via Sushi domain 21); thereby inhibit Ca(2+) intracellular signaling and as a result repress vasocontraction. ITGA4:ITGB1 and ITGA5:ITGB1 interacts with SELP. Interacts with CD248. ITGA5:ITGB1 interacts with IGFBP1. ITGA4:ITGB1 interacts with BCAM. Interacts with ADGRG6.

It is found in the cell membrane. It localises to the cell projection. The protein resides in the invadopodium membrane. The protein localises to the ruffle membrane. Its subcellular location is the recycling endosome. It is found in the melanosome. It localises to the cell junction. The protein resides in the focal adhesion. The protein localises to the lamellipodium. Its subcellular location is the ruffle. Functionally, integrins alpha-1/beta-1, alpha-2/beta-1, alpha-10/beta-1 and alpha-11/beta-1 are receptors for collagen. Integrins alpha-1/beta-1 and alpha-2/beta-2 recognize the proline-hydroxylated sequence G-F-P-G-E-R in collagen. Integrins alpha-2/beta-1, alpha-3/beta-1, alpha-4/beta-1, alpha-5/beta-1, alpha-8/beta-1, alpha-10/beta-1, alpha-11/beta-1 and alpha-V/beta-1 are receptors for fibronectin. Alpha-4/beta-1 recognizes one or more domains within the alternatively spliced CS-1 and CS-5 regions of fibronectin. Integrin alpha-5/beta-1 is a receptor for fibrinogen. Integrin alpha-1/beta-1, alpha-2/beta-1, alpha-6/beta-1 and alpha-7/beta-1 are receptors for lamimin. Integrin alpha-6/beta-1 (ITGA6:ITGB1) is present in oocytes and is involved in sperm-egg fusion. Integrin alpha-4/beta-1 is a receptor for VCAM1 and recognizes the sequence Q-I-D-S in VCAM1. Integrin alpha-9/beta-1 is a receptor for VCAM1, cytotactin and osteopontin. It recognizes the sequence A-E-I-D-G-I-E-L in cytotactin. Integrin alpha-3/beta-1 is a receptor for epiligrin, thrombospondin and CSPG4. Integrin alpha-3/beta-1 provides a docking site for FAP (seprase) at invadopodia plasma membranes in a collagen-dependent manner and hence may participate in the adhesion, formation of invadopodia and matrix degradation processes, promoting cell invasion. Alpha-3/beta-1 may mediate with LGALS3 the stimulation by CSPG4 of endothelial cells migration. Integrin alpha-V/beta-1 is a receptor for vitronectin. Beta-1 integrins recognize the sequence R-G-D in a wide array of ligands. When associated with alpha-7/beta-1 integrin, regulates cell adhesion and laminin matrix deposition. Involved in promoting endothelial cell motility and angiogenesis. Involved in osteoblast compaction through the fibronectin fibrillogenesis cell-mediated matrix assembly process and the formation of mineralized bone nodules. May be involved in up-regulation of the activity of kinases such as PKC via binding to KRT1. Together with KRT1 and RACK1, serves as a platform for SRC activation or inactivation. Plays a mechanistic adhesive role during telophase, required for the successful completion of cytokinesis. ITGA4:ITGB1 binds to fractalkine (CX3CL1) and may act as its coreceptor in CX3CR1-dependent fractalkine signaling. ITGA4:ITGB1 and ITGA5:ITGB1 bind to PLA2G2A via a site (site 2) which is distinct from the classical ligand-binding site (site 1) and this induces integrin conformational changes and enhanced ligand binding to site 1. ITGA5:ITGB1 acts as a receptor for fibrillin-1 (FBN1) and mediates R-G-D-dependent cell adhesion to FBN1. ITGA5:ITGB1 is a receptor for IL1B and binding is essential for IL1B signaling. ITGA5:ITGB3 is a receptor for soluble CD40LG and is required for CD40/CD40LG signaling. Plays an important role in myoblast differentiation and fusion during skeletal myogenesis. ITGA9:ITGB1 may play a crucial role in SVEP1/polydom-mediated myoblast cell adhesion. Integrins ITGA9:ITGB1 and ITGA4:ITGB1 repress PRKCA-mediated L-type voltage-gated channel Ca(2+) influx and ROCK-mediated calcium sensitivity in vascular smooth muscle cells via their interaction with SVEP1, thereby inhibit vasocontraction. The sequence is that of Integrin beta-1 from Camelus bactrianus (Bactrian camel).